A 524-amino-acid polypeptide reads, in one-letter code: Phosphoenolpyruvate carboxykinase (ATP) (524 aa).

R52, Y188, and K194 together coordinate substrate. ATP-binding positions include K194, H213, and 229–237 (GLSGTGKTT). Mn(2+) contacts are provided by K194 and H213. A Mn(2+)-binding site is contributed by D250. ATP is bound by residues E278, R314, and T439. Position 314 (R314) interacts with substrate.

This sequence belongs to the phosphoenolpyruvate carboxykinase (ATP) family. It depends on Mn(2+) as a cofactor.

It localises to the cytoplasm. It carries out the reaction oxaloacetate + ATP = phosphoenolpyruvate + ADP + CO2. Its pathway is carbohydrate biosynthesis; gluconeogenesis. In terms of biological role, involved in the gluconeogenesis. Catalyzes the conversion of oxaloacetate (OAA) to phosphoenolpyruvate (PEP) through direct phosphoryl transfer between the nucleoside triphosphate and OAA. The polypeptide is Phosphoenolpyruvate carboxykinase (ATP) (Campylobacter jejuni subsp. jejuni serotype O:2 (strain ATCC 700819 / NCTC 11168)).